Here is a 252-residue protein sequence, read N- to C-terminus: Phosphate import ATP-binding protein PstB (252 aa).

Positions 6–247 (IDTRDVNFWY…PEKEATQNYI (242 aa)) constitute an ABC transporter domain. 38–45 (GPSGCGKS) is a binding site for ATP.

Belongs to the ABC transporter superfamily. Phosphate importer (TC 3.A.1.7) family. In terms of assembly, the complex is composed of two ATP-binding proteins (PstB), two transmembrane proteins (PstC and PstA) and a solute-binding protein (PstS).

Its subcellular location is the cell inner membrane. It catalyses the reaction phosphate(out) + ATP + H2O = ADP + 2 phosphate(in) + H(+). Functionally, part of the ABC transporter complex PstSACB involved in phosphate import. Responsible for energy coupling to the transport system. This Bacteroides thetaiotaomicron (strain ATCC 29148 / DSM 2079 / JCM 5827 / CCUG 10774 / NCTC 10582 / VPI-5482 / E50) protein is Phosphate import ATP-binding protein PstB.